The following is a 58-amino-acid chain: Large ribosomal subunit protein uL30 (58 aa).

It belongs to the universal ribosomal protein uL30 family. In terms of assembly, part of the 50S ribosomal subunit.

The polypeptide is Large ribosomal subunit protein uL30 (Wigglesworthia glossinidia brevipalpis).